Consider the following 658-residue polypeptide: Trimethylamine N-oxide transport system permease protein TmoV (658 aa).

The next 15 helical transmembrane spans lie at 20 to 40 (LGLAMIGLAVMMTLLHYAGLL), 103 to 123 (IGPIPWSAIAAMTAVVGYYLG), 127 to 147 (MALLAGGTFVWTAMIGQWDIA), 153 to 173 (VLVVAAPLAFAIGLVLGISAW), 185 to 205 (VLAVLQTLPFFTYLLPAVIFF), 212 to 232 (GAVATTVYAIPPMILMTTLGL), 273 to 293 (VIMLCLAMVVLTAFIGMPGLG), 300 to 320 (MGSFKIGRSFEIGVTIVLLAV), 349 to 369 (FLLMAIGAFVGFTLIAQVVPI), 420 to 440 (FMLSIPTVAFVLFISAAALLV), 447 to 467 (VLAAAFFGLVALTGWWDRSVI), 469 to 489 (LYSVLAAVSIALLLGVPIGVV), 517 to 537 (IPAIMLFGITATSVVMSILIF), 585 to 605 (AVGFNQAIMFAFFMVIIAAFI), and 627 to 647 (FVLGICVTLMALTFDMVIMKW). The 180-residue stretch at 147 to 326 (AMQTMSVLVV…LLAVTLDRMS (180 aa)) folds into the ABC transmembrane type-1 1 domain. The 180-residue stretch at 465 to 644 (SVITLYSVLA…LMALTFDMVI (180 aa)) folds into the ABC transmembrane type-1 2 domain.

This sequence belongs to the binding-protein-dependent transport system permease family. The complex is probably composed of two ATP-binding proteins (TmoW), two transmembrane proteins (TmoV) and a solute-binding protein (TmoX).

The protein localises to the cell inner membrane. Part of the ABC transporter complex TmoXWV involved in trimethylamine N-oxide (TMAO) import. Responsible for the translocation of the substrate across the membrane. Is specific for TMAO and essential for TMAO metabolism. This is Trimethylamine N-oxide transport system permease protein TmoV from Ruegeria pomeroyi (strain ATCC 700808 / DSM 15171 / DSS-3) (Silicibacter pomeroyi).